Here is a 109-residue protein sequence, read N- to C-terminus: Cell division protein ZapA (109 aa).

Residues 21–99 are a coiled coil; the sequence is PEQRDALNQA…IEQALLEQGR (79 aa).

This sequence belongs to the ZapA family. Type 1 subfamily. As to quaternary structure, homodimer. Interacts with FtsZ.

It localises to the cytoplasm. Its function is as follows. Activator of cell division through the inhibition of FtsZ GTPase activity, therefore promoting FtsZ assembly into bundles of protofilaments necessary for the formation of the division Z ring. It is recruited early at mid-cell but it is not essential for cell division. This Klebsiella pneumoniae subsp. pneumoniae (strain ATCC 700721 / MGH 78578) protein is Cell division protein ZapA.